Here is a 307-residue protein sequence, read N- to C-terminus: MSFFSHHPSRSPRIWTDILLRWQGSVIPAIASRVLVCMAFSLGVTLVDGWGYKFSIPIQESIVPSIVLGLLLVFRTNTAYERFWEGRKAWGTMVNTIRNLSRIIWVSVAEPSPQAHQDKIKILHLLVAFAVATKLHLRSQPLNEEIWALLPESGYRKLEDLNNPPLEIAFWISNYLQREYDQNNINAYQLTAMLRLVDTMVDVLGSCERILKTPIPLAYAIHLRQLIFLYCFITPFQIVNTLHWATAFVVGIIAFTVFGIEEIGVEIENPFGHDANDLPLDQICQTMQANLEDLIQLPPWHQISHGD.

Transmembrane regions (helical) follow at residues 26-46, 54-74, 226-246, and 247-267; these read VIPA…GVTL, FSIP…LLVF, LIFL…HWAT, and AFVV…GVEI.

The protein belongs to the anion channel-forming bestrophin (TC 1.A.46) family.

It localises to the cell membrane. This is Voltage-dependent anion channel-forming protein sll1024 from Synechocystis sp. (strain ATCC 27184 / PCC 6803 / Kazusa).